Consider the following 190-residue polypeptide: Imidazoleglycerol-phosphate dehydratase (190 aa).

Belongs to the imidazoleglycerol-phosphate dehydratase family.

Its subcellular location is the cytoplasm. The catalysed reaction is D-erythro-1-(imidazol-4-yl)glycerol 3-phosphate = 3-(imidazol-4-yl)-2-oxopropyl phosphate + H2O. Its pathway is amino-acid biosynthesis; L-histidine biosynthesis; L-histidine from 5-phospho-alpha-D-ribose 1-diphosphate: step 6/9. This Aliarcobacter butzleri (strain RM4018) (Arcobacter butzleri) protein is Imidazoleglycerol-phosphate dehydratase.